The following is a 464-amino-acid chain: Argininosuccinate lyase (464 aa).

Belongs to the lyase 1 family. Argininosuccinate lyase subfamily.

Its subcellular location is the cytoplasm. The enzyme catalyses 2-(N(omega)-L-arginino)succinate = fumarate + L-arginine. The protein operates within amino-acid biosynthesis; L-arginine biosynthesis; L-arginine from L-ornithine and carbamoyl phosphate: step 3/3. The sequence is that of Argininosuccinate lyase from Pseudomonas fluorescens (strain SBW25).